Consider the following 291-residue polypeptide: Shikimate dehydrogenase (NADP(+)) (291 aa).

Shikimate contacts are provided by residues 14–16 (SKS) and Thr-61. The active-site Proton acceptor is Lys-65. Glu-77 contacts NADP(+). The shikimate site is built by Asn-86 and Asp-102. NADP(+)-binding positions include 139–143 (GAGGA), 164–169 (NRTFSR), and Leu-232. Tyr-234 provides a ligand contact to shikimate. Gly-256 contributes to the NADP(+) binding site.

It belongs to the shikimate dehydrogenase family. As to quaternary structure, homodimer.

It catalyses the reaction shikimate + NADP(+) = 3-dehydroshikimate + NADPH + H(+). Its pathway is metabolic intermediate biosynthesis; chorismate biosynthesis; chorismate from D-erythrose 4-phosphate and phosphoenolpyruvate: step 4/7. Functionally, involved in the biosynthesis of the chorismate, which leads to the biosynthesis of aromatic amino acids. Catalyzes the reversible NADPH linked reduction of 3-dehydroshikimate (DHSA) to yield shikimate (SA). This Blochmanniella pennsylvanica (strain BPEN) protein is Shikimate dehydrogenase (NADP(+)).